Reading from the N-terminus, the 381-residue chain is Anhydro-N-acetylmuramic acid kinase (381 aa).

Residue 13–20 participates in ATP binding; that stretch reads GTSLDGID.

It belongs to the anhydro-N-acetylmuramic acid kinase family.

It catalyses the reaction 1,6-anhydro-N-acetyl-beta-muramate + ATP + H2O = N-acetyl-D-muramate 6-phosphate + ADP + H(+). It functions in the pathway amino-sugar metabolism; 1,6-anhydro-N-acetylmuramate degradation. It participates in cell wall biogenesis; peptidoglycan recycling. Catalyzes the specific phosphorylation of 1,6-anhydro-N-acetylmuramic acid (anhMurNAc) with the simultaneous cleavage of the 1,6-anhydro ring, generating MurNAc-6-P. Is required for the utilization of anhMurNAc either imported from the medium or derived from its own cell wall murein, and thus plays a role in cell wall recycling. The chain is Anhydro-N-acetylmuramic acid kinase from Francisella tularensis subsp. novicida (strain U112).